Consider the following 430-residue polypeptide: Na(+)/H(+) antiporter NhaA 2 (430 aa).

A run of 10 helical transmembrane segments spans residues 11 to 31 (FVHGESFAGLLLVGTALIAFI), 60 to 80 (LSLEHWVNDGLMAVFFLLVGL), 97 to 117 (VALAVTAALGGMLVPAALYTA), 127 to 147 (GWGVPMSTDIAFALGVLALLG), 181 to 201 (LNLTFLTLAALTWGAALYAGW), 215 to 235 (VLLWFFVLKSGLHATIAGVLL), 288 to 308 (HALHPFVTFLVLPVFALTNAG), 309 to 329 (VPVAAGGFGSVSLGVLLGLLL), 356 to 376 (WGHMVGSGLLAGIGFTMSLFV), and 393 to 413 (GVLLASVLAALLGAGWLLLGI).

It belongs to the NhaA Na(+)/H(+) (TC 2.A.33) antiporter family.

Its subcellular location is the cell membrane. The enzyme catalyses Na(+)(in) + 2 H(+)(out) = Na(+)(out) + 2 H(+)(in). Its function is as follows. Na(+)/H(+) antiporter that extrudes sodium in exchange for external protons. In Deinococcus geothermalis (strain DSM 11300 / CIP 105573 / AG-3a), this protein is Na(+)/H(+) antiporter NhaA 2.